We begin with the raw amino-acid sequence, 122 residues long: Large ribosomal subunit protein uL14 (122 aa).

The protein belongs to the universal ribosomal protein uL14 family. Part of the 50S ribosomal subunit. Forms a cluster with proteins L3 and L19. In the 70S ribosome, L14 and L19 interact and together make contacts with the 16S rRNA in bridges B5 and B8.

In terms of biological role, binds to 23S rRNA. Forms part of two intersubunit bridges in the 70S ribosome. The sequence is that of Large ribosomal subunit protein uL14 from Citrifermentans bemidjiense (strain ATCC BAA-1014 / DSM 16622 / JCM 12645 / Bem) (Geobacter bemidjiensis).